Consider the following 226-residue polypeptide: DELTA-alicitoxin-Pse1b (226 aa).

The signal sequence occupies residues 1-21; the sequence is MRHFVVFLYMFLALSIPTAFA. The propeptide occupies 22 to 45; sequence KKHIVTKKGNHQDITNDNEGENAE. Positions 50–59 are plays an important role in the hemolytic activity; sequence TVAGAVIAGG. The segment at 58–77 is N-terminal region; the sequence is GGELALKILTKILYEIGKID. Residues Ser-101, Val-134, Ser-152, Pro-154, Tyr-180, and Tyr-184 each contribute to the phosphocholine site. The trp-rich region, which is important for the binding to lipid membrane stretch occupies residues 152 to 167; the sequence is SVPFDYNLYSNWWNVK.

Belongs to the actinoporin family. Sea anemone subfamily. In terms of assembly, octamer or nonamer in membranes. Monomer in the soluble state.

It localises to the secreted. It is found in the nematocyst. The protein resides in the target cell membrane. Its function is as follows. Pore-forming protein that forms cations-selective hydrophilic pores of around 1 nm and causes cytolysis. Pore formation is a multi-step process that involves specific recognition of membrane sphingomyelin (but neither cholesterol nor phosphatidylcholine) using aromatic rich region and adjacent phosphocholine (POC) binding site, firm binding to the membrane (mainly driven by hydrophobic interactions) accompanied by the transfer of the N-terminal region to the lipid-water interface and finally pore formation after oligomerization of monomers. This chain is DELTA-alicitoxin-Pse1b, found in Phyllodiscus semoni (Night anemone).